A 709-amino-acid polypeptide reads, in one-letter code: MLNFFAAAPKGFEYSLAQELTEFGATEVKESVAGVYFTASLALAYRITLWTRLASRIVLVIYKGSCESAEQLYNAAYCVDWPAHFSNKSTFSIDFHGTGGFLNNTQFGALKIKDAIVDRFRDDDIERPNVSRVDAEFKVDAHFRNGVITIAMNFSGPSLHQRGYRSTTGEAPLKENLAANMLVRSGWQASPSTLLDPFCGSGTVLIEAALMAADIAPGLQRSRFGFEHWRRHDKAVWQEIVEEAKARASLGVKRCEIKFYGSDIDSRLVALAKRNAENAGVLELIEFKVADALTIAPPAESGYLITNPPYGERLGNVSELLQLYYQLGDKFKKEFGGWKVAMLCSDIELVSSLKLKADKQMKMFNGALECAFNIYTLHANSTRRDTPVLPDGVDIADIAPAFANRIKKNAKLLEKWAKKEGIDSYRIYDADIPEYNVAVDKYLDYVIIQEYMAPATIPEAVTKRRLSDVLLALPSAIGINPNKMIMKTRERQKGTSQYQKLDERKLELITTEYGAKFKLNLTGYLDTGLFLDHRLTRRLVGQKSKGRRVLNLFSYTGSASVHAALGGAKSVTTVDMSNTYIAWAKDNFALNGLQGKQYEFVQSDCMQWIRDCNEQYDLIFIDPPTFSNSKRMEDSFDVQRDHVNLLASLVKLLSPTGELVFSNNKRKFKMDIETLTKMNINVTNIDDVTLPMDYKRNPHIHNTWLITHA.

Residues 43-154 (LAYRITLWTR…NGVITIAMNF (112 aa)) form the THUMP domain.

The protein belongs to the methyltransferase superfamily. RlmKL family.

The protein localises to the cytoplasm. The enzyme catalyses guanosine(2445) in 23S rRNA + S-adenosyl-L-methionine = N(2)-methylguanosine(2445) in 23S rRNA + S-adenosyl-L-homocysteine + H(+). The catalysed reaction is guanosine(2069) in 23S rRNA + S-adenosyl-L-methionine = N(2)-methylguanosine(2069) in 23S rRNA + S-adenosyl-L-homocysteine + H(+). Functionally, specifically methylates the guanine in position 2445 (m2G2445) and the guanine in position 2069 (m7G2069) of 23S rRNA. This chain is Ribosomal RNA large subunit methyltransferase K/L, found in Shewanella baltica (strain OS195).